The primary structure comprises 327 residues: Zinc transport protein ZntB (327 aa).

The Cytoplasmic segment spans residues 1–273 (MEAIKGSDVN…ARRTYTMSLM (273 aa)). A helical transmembrane segment spans residues 274–294 (AMVFLPSTFLTGLFGVNLGGI). The Periplasmic portion of the chain corresponds to 295 to 300 (PGGGWR). The chain crosses the membrane as a helical span at residues 301-321 (FGFSLFCILLVVLIGGVTLWL). Residues 322–327 (HRSKWL) are Cytoplasmic-facing.

Belongs to the CorA metal ion transporter (MIT) (TC 1.A.35) family.

It localises to the cell inner membrane. It catalyses the reaction Zn(2+)(out) + H(+)(out) = Zn(2+)(in) + H(+)(in). Zinc transporter. Acts as a Zn(2+):proton symporter, which likely mediates zinc ion uptake. In Salmonella choleraesuis (strain SC-B67), this protein is Zinc transport protein ZntB.